The primary structure comprises 169 residues: uncharacterized protein (169 aa).

The next 3 helical transmembrane spans lie at alanine 25–phenylalanine 45, phenylalanine 57–phenylalanine 77, and leucine 91–valine 111.

The protein belongs to the major facilitator superfamily. Allantoate permease family.

Its subcellular location is the membrane. This is an uncharacterized protein from Saccharomyces cerevisiae (strain ATCC 204508 / S288c) (Baker's yeast).